We begin with the raw amino-acid sequence, 491 residues long: UDP-N-acetylmuramoyl-L-alanyl-D-glutamate--2,6-diaminopimelate ligase (491 aa).

Ser30 is a UDP-N-acetyl-alpha-D-muramoyl-L-alanyl-D-glutamate binding site. 108–114 (GTNGKTT) serves as a coordination point for ATP. UDP-N-acetyl-alpha-D-muramoyl-L-alanyl-D-glutamate contacts are provided by residues Asn149, 150–151 (TT), Ser177, Gln183, and Arg185. Residue Lys217 is modified to N6-carboxylysine. Residues Arg383, 407 to 410 (DNPR), Gly458, and Glu462 contribute to the meso-2,6-diaminopimelate site. The Meso-diaminopimelate recognition motif motif lies at 407-410 (DNPR).

Belongs to the MurCDEF family. MurE subfamily. The cofactor is Mg(2+). Carboxylation is probably crucial for Mg(2+) binding and, consequently, for the gamma-phosphate positioning of ATP.

It localises to the cytoplasm. It carries out the reaction UDP-N-acetyl-alpha-D-muramoyl-L-alanyl-D-glutamate + meso-2,6-diaminopimelate + ATP = UDP-N-acetyl-alpha-D-muramoyl-L-alanyl-gamma-D-glutamyl-meso-2,6-diaminopimelate + ADP + phosphate + H(+). The protein operates within cell wall biogenesis; peptidoglycan biosynthesis. Functionally, catalyzes the addition of meso-diaminopimelic acid to the nucleotide precursor UDP-N-acetylmuramoyl-L-alanyl-D-glutamate (UMAG) in the biosynthesis of bacterial cell-wall peptidoglycan. The protein is UDP-N-acetylmuramoyl-L-alanyl-D-glutamate--2,6-diaminopimelate ligase of Listeria innocua serovar 6a (strain ATCC BAA-680 / CLIP 11262).